An 82-amino-acid polypeptide reads, in one-letter code: RNA-binding protein Hfq (82 aa).

One can recognise a Sm domain in the interval 10-70; that stretch reads DIFLNGARKN…LSTITPSKAI (61 aa).

Belongs to the Hfq family. As to quaternary structure, homohexamer.

Functionally, RNA chaperone that binds small regulatory RNA (sRNAs) and mRNAs to facilitate mRNA translational regulation in response to envelope stress, environmental stress and changes in metabolite concentrations. Also binds with high specificity to tRNAs. The polypeptide is RNA-binding protein Hfq (Clostridium kluyveri (strain NBRC 12016)).